The sequence spans 412 residues: Keratin, type I microfibrillar 48 kDa, component 8C-1 (412 aa).

Position 1 is an N-acetylserine (serine 1). Residues 1 to 55 (SFNFCLPNLSFRSSCSSRPCVPSSCCGTTLPGACNIPANVGSCNWFCEGSFDGNE) form a head region. The IF rod domain occupies 55–366 (EKETMQFLND…GLLDSEDCKL (312 aa)). Positions 56-90 (KETMQFLNDRLASYLEKVRQLERENAELESRILER) are coil 1A. The linker 1 stretch occupies residues 91–101 (SQQQEPLVCPN). The interval 102–202 (YQSYFRTIEE…HEEEVNTLRS (101 aa)) is coil 1B. A linker 12 region spans residues 203–218 (QLGDRLNVEVDAAPTV). A coil 2 region spans residues 219–362 (DLNRVLNETR…NTYRGLLDSE (144 aa)). Residues 363–412 (DCKLPCNPCATTNACGKTITPCISSPCAPAAPCTPCVPRSRCGPCNSYVR) form a tail region.

The protein belongs to the intermediate filament family.

In terms of biological role, wool microfibrillar keratin. This is Keratin, type I microfibrillar 48 kDa, component 8C-1 from Ovis aries (Sheep).